Consider the following 501-residue polypeptide: Cilia- and flagella-associated protein 45 (501 aa).

Positions 75–114 (MTAEDVAAAKREAEAKREQLQAVSKARKEKMLKLEEEAKK) form a coiled coil.

It belongs to the CFAP45 family.

The protein localises to the cell projection. It localises to the cilium. Its subcellular location is the flagellum. The chain is Cilia- and flagella-associated protein 45 from Chlamydomonas reinhardtii (Chlamydomonas smithii).